Reading from the N-terminus, the 1253-residue chain is Pleckstrin homology-like domain family B member 2 (1253 aa).

Basic and acidic residues predominate over residues 1–12 (MEEHSYIQKELD). Disordered regions lie at residues 1–43 (MEEH…PKKY), 60–159 (LTLS…KSHD), and 187–212 (DAGP…RKMS). Residues 29–43 (NDSQNMMESLSPKKY) show a composition bias toward polar residues. Phosphoserine occurs at positions 71 and 73. The span at 74–96 (PLGTSVRSSPSLAKIQGSKQFSY) shows a compositional bias: polar residues. Positions 126–144 (ADFDHYTGRDSERALRLSE) are enriched in basic and acidic residues. A phosphoserine mark is found at S157, S204, S212, S242, and S245. The interval 265–286 (NQLTPLSLPPRNSLGNSKRTKL) is disordered. A phosphoserine mark is found at S330, S334, S348, S351, S384, S387, S415, S420, S468, S489, and S501. The residue at position 504 (T504) is a Phosphothreonine. A Phosphoserine modification is found at S513. A disordered region spans residues 525-567 (LSQSSASFFTPRSTRNDELLSDLTRTPPPPSSTFPKASSESSY). 2 positions are modified to phosphothreonine: T550 and T574. Coiled-coil stretches lie at residues 584–696 (SQEL…LDNC) and 722–807 (FEDL…LCNL). A Phosphothreonine modification is found at T898. The stretch at 1032–1098 (IARIEEMERL…QKLIEKEVKI (67 aa)) forms a coiled coil. One can recognise a PH domain in the interval 1143 to 1246 (EKTCRGFLIK…WMDVIVTGAE (104 aa)).

In terms of assembly, interacts with FLNC. Interacts with AMOTL2; interaction may facilitate PHLDB2 localization to the myotube podosome cortex that surrounds the core. Part of a cortical microtubule stabilization complex (CMSC) composed of KANK1, PPFIA1, PPFIBP1, ERC1/ELKS, PHLDB2/LL5beta, CLASPs, KIF21A and possibly additional interactors; within CMSCs KANK1 and PHLDB2/LL5beta appear to be the core components for targeting of microtubule-binding proteins KIF21A and CLASPs, whereas PPFIA1, PPFIBP1 and ERC1/ELKS serve as scaffolds for protein clustering.

The protein localises to the cytoplasm. Its subcellular location is the cell cortex. It localises to the membrane. The protein resides in the cell projection. It is found in the podosome. Seems to be involved in the assembly of the postsynaptic apparatus. May play a role in acetyl-choline receptor (AChR) aggregation in the postsynaptic membrane. The chain is Pleckstrin homology-like domain family B member 2 (PHLDB2) from Homo sapiens (Human).